The following is a 518-amino-acid chain: Nitrogenase iron-iron protein alpha chain (518 aa).

[8Fe-7S] cluster is bound by residues cysteine 49, cysteine 75, and cysteine 138. [8Fe-9S-C-homocitryl] cluster is bound by residues cysteine 257 and histidine 423.

The protein belongs to the NifD/NifK/NifE/NifN family. Hexamer of two alpha, two beta, and two delta chains. [8Fe-7S] cluster serves as cofactor. [8Fe-9S-C-homocitryl] cluster is required as a cofactor.

It carries out the reaction N2 + 8 reduced [2Fe-2S]-[ferredoxin] + 16 ATP + 16 H2O = H2 + 8 oxidized [2Fe-2S]-[ferredoxin] + 2 NH4(+) + 16 ADP + 16 phosphate + 6 H(+). Its function is as follows. This iron-iron protein is part of the nitrogenase complex that catalyzes the key enzymatic reactions in nitrogen fixation. Other nitrogenase complexes utilize a molybdenum-iron protein or a vanadium-iron protein. The protein is Nitrogenase iron-iron protein alpha chain (anfD) of Azotobacter vinelandii.